Reading from the N-terminus, the 222-residue chain is UPF0758 protein YicR (222 aa).

The MPN domain occupies 100 to 222 (PLLSPEMTRE…YVSFAERGWI (123 aa)). H171, H173, and D184 together coordinate Zn(2+). Residues 171–184 (HNHPSGCAEPSKAD) carry the JAMM motif motif.

Belongs to the UPF0758 family. YicR subfamily.

The sequence is that of UPF0758 protein YicR from Escherichia coli O81 (strain ED1a).